Reading from the N-terminus, the 189-residue chain is MPVAKDNQFWDALMENKVAKKLIKKHKCKAKCENIDDLANRYEVSKQEVEKVFKIFQLMDDDGSGTISSSEVAKMLNELGIDVSPKVVQAVMRSSDVSGDGQIDFEEFLAAVTSKIKLSTVKADVQLMLSKIDNNPEKVISAEELVVAWSETVSTNITVKEACALIQQADTQGRGKATIHEFITMCQTV.

A coiled-coil region spans residues 31-54; that stretch reads KCENIDDLANRYEVSKQEVEKVFK. EF-hand domains lie at 47–82, 83–118, 120–155, and 157–189; these read QEVE…LGID, VSPK…KIKL, TVKA…TVST, and ITVK…CQTV. 14 residues coordinate Ca(2+): Asp-60, Asp-62, Ser-64, Thr-66, Glu-71, Asp-96, Ser-98, Asp-100, Gln-102, Glu-107, Asp-133, Asn-135, Glu-137, and Glu-144.

This is an uncharacterized protein from Caenorhabditis elegans.